Consider the following 112-residue polypeptide: UPF0122 protein CPR_1686 (112 aa).

The protein belongs to the UPF0122 family.

Its function is as follows. Might take part in the signal recognition particle (SRP) pathway. This is inferred from the conservation of its genetic proximity to ftsY/ffh. May be a regulatory protein. The protein is UPF0122 protein CPR_1686 of Clostridium perfringens (strain SM101 / Type A).